Reading from the N-terminus, the 168-residue chain is Small ribosomal subunit protein uS8 (168 aa).

The not found in other S8 sequences stretch occupies residues 59-93 (EEYKKMKELAEKSPNPKMKRYLKQLEEYNKGTQYP).

Belongs to the universal ribosomal protein uS8 family. Part of the 30S ribosomal subunit. Contacts proteins S5 and S12.

One of the primary rRNA binding proteins, it binds directly to 16S rRNA central domain where it helps coordinate assembly of the platform of the 30S subunit. The sequence is that of Small ribosomal subunit protein uS8 from Aquifex aeolicus (strain VF5).